The sequence spans 75 residues: Antimicrobial peptide ctriporin (75 aa).

A signal peptide spans 1 to 22 (MDSKYLFVFLIFNVIVIDLCQG). Residue Lys-41 is modified to Lysine amide. The propeptide occupies 47-75 (ELGSQYDYLQDFRKRELDLDDLLSKFPDY).

It belongs to the non-disulfide-bridged peptide (NDBP) superfamily. Short antimicrobial peptide (group 4) family. As to expression, expressed by the venom gland.

It localises to the secreted. The protein localises to the target cell membrane. Antimicrobial peptide that acts by breaking the cell wall. Is active against Gram-positive bacteria, fungi and antibiotic-resistant pathogens: S.aureus (MIC=5 ug/ml), M.luteus (MIC=5 ug/ml), B.thuringiensis (MIC=10 ug/ml), B.subtilis (MIC=10 ug/ml), C.albicans (MIC=20 ug/ml), methicillin-resistant S.aureus (MIC=5-10 ug/ml), and penicillin-resistant S.epidermidis (MIC=10 ug/ml). Also shows potent activity against antibiotic-sensitive and -resistant Acinetobacter baumannii (MIC=10-20 uM). Shows cytolytic activity against human erythrocytes. In vivo, is efficient in curing staphylococcal skin infection in mice, when externally applied. This is Antimicrobial peptide ctriporin from Chaerilus tricostatus (Scorpion).